The primary structure comprises 1330 residues: ESX-3 secretion system protein EccC3 (1330 aa).

2 helical membrane-spanning segments follow: residues 43–63 (LPYL…ATGM) and 65–85 (VISP…TALY). FtsK domains follow at residues 456-662 (GEPL…SVSR), 811-1000 (RDPL…RDSN), and 1090-1280 (LAPV…ADSG). Residues 479-486 (GMTGSGKS), 829-836 (GGPKSGKS), and 1107-1114 (GDARSGKT) each bind ATP.

In terms of assembly, part of the ESX-3 / type VII secretion system (T7SS), which is composed of cytosolic and membrane components. The ESX-3 membrane complex is composed of EccB3, EccC3, EccD3 and EccE3.

It is found in the cell inner membrane. In terms of biological role, part of the ESX-3 specialized secretion system, which is important for iron and zinc uptake or homeostasis. This is ESX-3 secretion system protein EccC3 from Mycobacterium tuberculosis (strain ATCC 25618 / H37Rv).